The primary structure comprises 734 residues: Putative K(+)-stimulated pyrophosphate-energized sodium pump (734 aa).

5 consecutive transmembrane segments (helical) span residues 3-23, 58-78, 82-102, 134-154, and 169-189; these read SILF…AYYF, IVGC…YGFH, VWVP…GFLG, VMGL…YLLL, and LCVI…QALF. Lys199 serves as a coordination point for substrate. Mg(2+) is bound by residues Asp202, Asp206, Asn229, and Asp232. The next 7 membrane-spanning stretches (helical) occupy residues 244–264, 275–295, 314–334, 336–356, 377–397, 398–418, and 423–443; these read LYES…AAFI, AVIA…IGIF, FGTN…LWLL, LDNW…GIVI, SGKT…MLST, AIPV…ASGF, and VGMG…TLGI. Asp455 provides a ligand contact to Mg(2+). The next 4 membrane-spanning stretches (helical) occupy residues 491–511, 557–577, 629–649, and 650–670; these read FAIG…IEEI, GMFL…NAVG, ILAP…GLLI, and GGLS…GAWD. Positions 670, 696, and 700 each coordinate Ca(2+). Position 703 (Lys703) interacts with substrate. A helical membrane pass occupies residues 712-732; it reads ILIKLMSMVAIVMAGLTVAWS.

The protein belongs to the H(+)-translocating pyrophosphatase (TC 3.A.10) family. K(+)-stimulated subfamily. As to quaternary structure, homodimer. Mg(2+) serves as cofactor.

The protein localises to the cell inner membrane. The enzyme catalyses Na(+)(in) + diphosphate + H2O = Na(+)(out) + 2 phosphate + H(+). Requires K(+) for maximal activity. Sodium pump that utilizes the energy of pyrophosphate hydrolysis as the driving force for Na(+) movement across the membrane. The protein is Putative K(+)-stimulated pyrophosphate-energized sodium pump of Bacteroides thetaiotaomicron (strain ATCC 29148 / DSM 2079 / JCM 5827 / CCUG 10774 / NCTC 10582 / VPI-5482 / E50).